We begin with the raw amino-acid sequence, 445 residues long: Transcription activator AFTR-1 (445 aa).

Residues 17 to 44 (CDFCTQSKLRCNKNKPSCRRCTLQQQPC) constitute a DNA-binding region (zn(2)-C6 fungal-type). The tract at residues 50–89 (RRTGRPPKHPRKANDCQEANGQHGDQDPVTSTPGGSYQQQ) is disordered. Residues 51–60 (RTGRPPKHPR) are compositionally biased toward basic residues. Polar residues predominate over residues 77–89 (PVTSTPGGSYQQQ).

It localises to the nucleus. Functionally, transcription factor that regulates the expression of the gene clusters that mediate the biosynthesis of the host-selective toxins (HSTs) AF-toxins responsible for Alternaria black spot of strawberry disease by the strawberry pathotype. On cellular level, AF-toxins affect plasma membrane of susceptible cells and cause a sudden increase in loss of K(+) after a few minutes of toxin treatment. The protein is Transcription activator AFTR-1 of Alternaria alternata (Alternaria rot fungus).